The primary structure comprises 207 residues: Galactoside O-acetyltransferase (207 aa).

N87 lines the acetyl-CoA pocket. Catalysis depends on H117, which acts as the Proton donor/acceptor. Residues A144, A162, 167 to 168 (TK), and R185 each bind acetyl-CoA.

The protein belongs to the transferase hexapeptide repeat family. As to quaternary structure, homotrimer.

The protein localises to the cytoplasm. It catalyses the reaction a beta-D-galactoside + acetyl-CoA = a 6-acetyl-beta-D-galactoside + CoA. The chain is Galactoside O-acetyltransferase (lacA) from Lactococcus lactis subsp. lactis (strain IL1403) (Streptococcus lactis).